Here is a 130-residue protein sequence, read N- to C-terminus: Protein ApaG (130 aa).

Residues 3-127 enclose the ApaG domain; sequence RAITRNIQVT…FSLDVPDVRR (125 aa).

The protein is Protein ApaG of Xanthobacter autotrophicus (strain ATCC BAA-1158 / Py2).